Consider the following 526-residue polypeptide: Importin subunit alpha-1a (526 aa).

The 58-residue stretch at M1–P58 folds into the IBB domain. ARM repeat units follow at residues S105 to S145, S148 to G187, P190 to R230, K232 to D271, N274 to T313, D316 to A356, K359 to S398, and H402 to K441.

The protein belongs to the importin alpha family. As to quaternary structure, forms a complex with importin subunit beta-1. The whole complex, most stable and composed of importin alpha, importin beta and NLS substrate, is referred to as PTAC or pore targeting complex. Interacts with mungbean yellow mosaic virus capsid protein. As to expression, highly expressed in callus, followed by root and etiolated leaf. Low expression in green leaf.

It localises to the cytoplasm. It is found in the perinuclear region. Functionally, functions in nuclear protein import. Binds specifically and directly to substrates containing either a simple or bipartite NLS motif. Promotes docking of import substrates to the nuclear envelope. The chain is Importin subunit alpha-1a from Oryza sativa subsp. japonica (Rice).